The primary structure comprises 81 residues: Protein L83L (81 aa).

Residues 1–28 form a disordered region; sequence MDTSLKNNDGALEADNKNYQDYKDEPDK. Over residues 14 to 28 the composition is skewed to basic and acidic residues; it reads ADNKNYQDYKDEPDK.

It belongs to the asfivirus L83L family. In terms of assembly, interacts with host IL1B.

It is found in the host cytoplasm. Its function is as follows. May subvert the host innate immune response by interacting with host IL1B and interfering with its function. The polypeptide is Protein L83L (Ornithodoros (relapsing fever ticks)).